The primary structure comprises 318 residues: Olfactory receptor-like protein COR1 (318 aa).

The Extracellular segment spans residues 1 to 26; sequence MASGNCTTPTTFILSGLTDNPGLQMP. The N-linked (GlcNAc...) asparagine glycan is linked to Asn5. Residues 27–49 traverse the membrane as a helical segment; sequence LFMVFLAIYTITLLTNLGLIALI. At 50–57 the chain is on the cytoplasmic side; that stretch reads SVDLHLQT. The chain crosses the membrane as a helical span at residues 58-79; it reads PMYIFLQNLSFTDAAYSTVITP. Residues 80 to 100 are Extracellular-facing; that stretch reads KMLATFLEERKTISYVGCILQ. Cys97 and Cys179 are disulfide-bonded. A helical transmembrane segment spans residues 101–120; sequence YFSFVLLTVTESLLLAVMAY. The Cytoplasmic segment spans residues 121-139; the sequence is DRYVAICKPLLYPSIMTKA. The chain crosses the membrane as a helical span at residues 140-164; that stretch reads VCWRLVESLYFLAFLNSLVHTSGLL. Residues 165-205 lie on the Extracellular side of the membrane; that stretch reads KLSFCYSNVVNHFFCDISPLFQISSSSIAISELLVIISGSL. Residues 206–226 form a helical membrane-spanning segment; it reads FVMSSIIIILISYVFIILTVV. Topologically, residues 227 to 239 are cytoplasmic; that stretch reads MIRSKDGKYKAFS. Residues 240–260 traverse the membrane as a helical segment; sequence TCTSHLMAVSLFHGTVIFMYL. Residues 261–271 are Extracellular-facing; the sequence is RPVKLFSLDTD. A helical membrane pass occupies residues 272–292; sequence KIASLFYTVVIPMLNPLIYSW. The Cytoplasmic portion of the chain corresponds to 293 to 318; sequence RNKEVKDALRRLTATTFGFIDSKAVQ.

This sequence belongs to the G-protein coupled receptor 1 family.

Its subcellular location is the cell membrane. In terms of biological role, odorant receptor. The sequence is that of Olfactory receptor-like protein COR1 (COR1) from Gallus gallus (Chicken).